A 136-amino-acid polypeptide reads, in one-letter code: Magnetite biomineralization protein Mms6 (136 aa).

The Cytoplasmic segment spans residues 1–85 (MGEMEREGAT…AVGGTIWSGK (85 aa)). Residues 86–95 (GLALGLGMGL) form a GL repeat region. A helical transmembrane segment spans residues 86–106 (GLALGLGMGLGAWGPLILGVV). Residues 107 to 136 (GAGAVYAYMKSRDIEAAQSDEEVELRDALS) are Lumenal-facing. The segment at 115-136 (MKSRDIEAAQSDEEVELRDALS) is MIC, self-assembles, binds magnetite, Fe(2+) and Fe(3+).

It belongs to the magnetosome Mms6 family. In terms of assembly, full length protein oligomerizes and interacts with MamA. In terms of processing, may undergo cleavage.

The protein localises to the magnetosome membrane. Its function is as follows. Promotes the formation of magnetite in Fe(2+)-rich conditions, when magnetite is not readily formed. Binds both Fe(2+) and Fe(3+). May help control the production of crystals with a specific morphology. May function with MamX, MamY amd MamZ in biomineralization. The 4 genes of this operon collectively influence magnetosome size and number. This is Magnetite biomineralization protein Mms6 from Magnetospirillum gryphiswaldense (strain DSM 6361 / JCM 21280 / NBRC 15271 / MSR-1).